The following is a 257-amino-acid chain: UPF0246 protein Spea_1078 (257 aa).

This sequence belongs to the UPF0246 family.

This is UPF0246 protein Spea_1078 from Shewanella pealeana (strain ATCC 700345 / ANG-SQ1).